A 426-amino-acid chain; its full sequence is Adenylosuccinate synthetase (426 aa).

Residues 18 to 24 (GDEGKGK) and 46 to 48 (GHT) each bind GTP. D19 (proton acceptor) is an active-site residue. Mg(2+) contacts are provided by D19 and G46. Residues 19–22 (DEGK), 44–47 (NAGH), T136, R150, Q222, T237, and R301 contribute to the IMP site. H47 serves as the catalytic Proton donor. 297 to 303 (VTTKRKR) serves as a coordination point for substrate. Residues R303, 329–331 (KID), and 413–415 (GTG) contribute to the GTP site.

It belongs to the adenylosuccinate synthetase family. In terms of assembly, homodimer. Mg(2+) serves as cofactor.

It localises to the cytoplasm. The enzyme catalyses IMP + L-aspartate + GTP = N(6)-(1,2-dicarboxyethyl)-AMP + GDP + phosphate + 2 H(+). Its pathway is purine metabolism; AMP biosynthesis via de novo pathway; AMP from IMP: step 1/2. Functionally, plays an important role in the de novo pathway and in the salvage pathway of purine nucleotide biosynthesis. Catalyzes the first committed step in the biosynthesis of AMP from IMP. The polypeptide is Adenylosuccinate synthetase (Schistosoma mansoni (Blood fluke)).